The primary structure comprises 357 residues: Peptide chain release factor 1 (357 aa).

An N5-methylglutamine modification is found at Gln236. Residues 283–309 (ERRKKDQERANNRREQIGSGDRSERIR) show a composition bias toward basic and acidic residues. The segment at 283–313 (ERRKKDQERANNRREQIGSGDRSERIRTYNF) is disordered.

It belongs to the prokaryotic/mitochondrial release factor family. Post-translationally, methylated by PrmC. Methylation increases the termination efficiency of RF1.

The protein resides in the cytoplasm. Its function is as follows. Peptide chain release factor 1 directs the termination of translation in response to the peptide chain termination codons UAG and UAA. The chain is Peptide chain release factor 1 from Rickettsia bellii (strain OSU 85-389).